The chain runs to 199 residues: MSSGNAKIGYPAPNFKATAVMPDGQFRDICLSEYRGKYVVFFFYPLDFTFVCPTEIIAFSDRAEEFKKLNCQVIGASVDSHFCHLAWINTPKKQGGLGPMNIPLVSDPKRTIAQDYGVLKADEGISFRGLFIIDDKGILRQITINDLPVGRSVDEILRLVQAFQFTDKHGEVCPAGWKPGSDTIKPDVQKSKEYFSKQK.

At Ser-2 the chain carries N-acetylserine. Positions 6–165 (AKIGYPAPNF…ILRLVQAFQF (160 aa)) constitute a Thioredoxin domain. Lys-7 bears the N6-acetyllysine; alternate mark. A Glycyl lysine isopeptide (Lys-Gly) (interchain with G-Cter in SUMO2); alternate cross-link involves residue Lys-7. An N6-acetyllysine modification is found at Lys-16. Phosphoserine is present on Ser-32. Cys-52 acts as the Cysteine sulfenic acid (-SOH) intermediate in catalysis. Thr-90 carries the phosphothreonine modification. Residue Lys-120 forms a Glycyl lysine isopeptide (Lys-Gly) (interchain with G-Cter in SUMO2) linkage. Residue Lys-136 is modified to N6-acetyllysine. The tract at residues 176–199 (GWKPGSDTIKPDVQKSKEYFSKQK) is disordered. Over residues 184–199 (IKPDVQKSKEYFSKQK) the composition is skewed to basic and acidic residues. Lys-185 participates in a covalent cross-link: Glycyl lysine isopeptide (Lys-Gly) (interchain with G-Cter in SUMO1). Residue Lys-197 is modified to N6-acetyllysine.

The protein belongs to the peroxiredoxin family. AhpC/Prx1 subfamily. Homodimer; disulfide-linked, upon oxidation. 5 homodimers assemble to form a ring-like decamer. Interacts with GDPD5; forms a mixed-disulfide with GDPD5. Interacts with SESN1 and SESN2. Interacts with FAM107A. Post-translationally, phosphorylated on Thr-90 during the M-phase, which leads to a decrease in enzymatic activity. Acetylation increases reducing activity and resistance to superoxidation. Deacetylated by HDAC6 which decreases reducing activity.

The protein resides in the cytoplasm. The enzyme catalyses a hydroperoxide + [thioredoxin]-dithiol = an alcohol + [thioredoxin]-disulfide + H2O. Functionally, thiol-specific peroxidase that catalyzes the reduction of hydrogen peroxide and organic hydroperoxides to water and alcohols, respectively. Plays a role in cell protection against oxidative stress by detoxifying peroxides and as sensor of hydrogen peroxide-mediated signaling events. Might participate in the signaling cascades of growth factors and tumor necrosis factor-alpha by regulating the intracellular concentrations of H(2)O(2). Reduces an intramolecular disulfide bond in GDPD5 that gates the ability to GDPD5 to drive postmitotic motor neuron differentiation. The polypeptide is Peroxiredoxin-1 (PRDX1) (Cricetulus griseus (Chinese hamster)).